The sequence spans 70 residues: Cold shock-like protein CspF (70 aa).

The CSD domain occupies 7–67 (GIVKTFDGKS…GLRGPSAANV (61 aa)).

The protein localises to the cytoplasm. The sequence is that of Cold shock-like protein CspF (cspF) from Escherichia coli (strain K12).